The sequence spans 266 residues: 5'-nucleotidase SurE (266 aa).

Residues Asp-8, Asp-9, Ser-42, and Asn-98 each contribute to the a divalent metal cation site.

The protein belongs to the SurE nucleotidase family. A divalent metal cation serves as cofactor.

Its subcellular location is the cytoplasm. The enzyme catalyses a ribonucleoside 5'-phosphate + H2O = a ribonucleoside + phosphate. In terms of biological role, nucleotidase that shows phosphatase activity on nucleoside 5'-monophosphates. This chain is 5'-nucleotidase SurE, found in Methanocaldococcus jannaschii (strain ATCC 43067 / DSM 2661 / JAL-1 / JCM 10045 / NBRC 100440) (Methanococcus jannaschii).